The chain runs to 364 residues: Membrane-bound lytic murein transglycosylase C (364 aa).

The first 19 residues, 1–19 (MNKYKKFLPLLVLIPFLAS), serve as a signal peptide directing secretion. Cysteine 20 is lipidated: N-palmitoyl cysteine. A lipid anchor (S-diacylglycerol cysteine) is attached at cysteine 20.

The protein belongs to the transglycosylase Slt family.

The protein localises to the cell outer membrane. It carries out the reaction Exolytic cleavage of the (1-&gt;4)-beta-glycosidic linkage between N-acetylmuramic acid (MurNAc) and N-acetylglucosamine (GlcNAc) residues in peptidoglycan, from either the reducing or the non-reducing ends of the peptidoglycan chains, with concomitant formation of a 1,6-anhydrobond in the MurNAc residue.. Murein-degrading enzyme. May play a role in recycling of muropeptides during cell elongation and/or cell division. The chain is Membrane-bound lytic murein transglycosylase C from Glaesserella parasuis serovar 5 (strain SH0165) (Haemophilus parasuis).